The sequence spans 1196 residues: Truncated transposon Ty1-A Gag-Pol polyprotein (1196 aa).

The Integrase catalytic domain maps to Asn101–Pro276. Residues Asp112 and Asp177 each coordinate Mg(2+). Disordered regions lie at residues Ser397–Lys528, Arg533–Pro552, and Asp571–Thr628. The segment covering Ser401–Thr410 has biased composition (low complexity). The segment covering Ser446–Thr456 has biased composition (polar residues). Positions Glu479–Ser494 are enriched in basic and acidic residues. Composition is skewed to polar residues over residues Tyr495 to Asp523 and Pro542 to Pro552. Positions Lys619–Arg653 match the Bipartite nuclear localization signal motif. The Reverse transcriptase Ty1/copia-type domain maps to Asn779–Gln917. Asp787, Asp868, Asp869, Asp1051, Glu1093, and Asp1126 together coordinate Mg(2+). The RNase H Ty1/copia-type domain occupies Asp1051 to Lys1193.

Post-translationally, initially, virus-like particles (VLPs) are composed of the structural unprocessed proteins Gag and Gag-Pol, and also contain the host initiator methionine tRNA (tRNA(i)-Met) which serves as a primer for minus-strand DNA synthesis, and a dimer of genomic Ty RNA. Processing of the polyproteins occurs within the particle and proceeds by an ordered pathway, called maturation. First, the protease (PR) is released by autocatalytic cleavage of the Gag-Pol polyprotein yielding capsid protein p45 and a Pol-p154 precursor protein. This cleavage is a prerequisite for subsequent processing of Pol-p154 at the remaining sites to release the mature structural and catalytic proteins. Maturation takes place prior to the RT reaction and is required to produce transposition-competent VLPs.

The protein localises to the cytoplasm. Its subcellular location is the nucleus. It catalyses the reaction DNA(n) + a 2'-deoxyribonucleoside 5'-triphosphate = DNA(n+1) + diphosphate. It carries out the reaction Endonucleolytic cleavage to 5'-phosphomonoester.. Its function is as follows. Reverse transcriptase/ribonuclease H (RT) is a multifunctional enzyme that catalyzes the conversion of the retro-elements RNA genome into dsDNA within the VLP. The enzyme displays a DNA polymerase activity that can copy either DNA or RNA templates, and a ribonuclease H (RNase H) activity that cleaves the RNA strand of RNA-DNA heteroduplexes during plus-strand synthesis and hydrolyzes RNA primers. The conversion leads to a linear dsDNA copy of the retrotransposon that includes long terminal repeats (LTRs) at both ends. Functionally, integrase (IN) targets the VLP to the nucleus, where a subparticle preintegration complex (PIC) containing at least integrase and the newly synthesized dsDNA copy of the retrotransposon must transit the nuclear membrane. Once in the nucleus, integrase performs the integration of the dsDNA into the host genome. The protein is Truncated transposon Ty1-A Gag-Pol polyprotein (TY1B-A) of Saccharomyces cerevisiae (strain ATCC 204508 / S288c) (Baker's yeast).